A 361-amino-acid chain; its full sequence is D-malate dehydrogenase [decarboxylating] (361 aa).

Mn(2+) is bound by residues aspartate 224, aspartate 248, and aspartate 252.

The protein belongs to the isocitrate and isopropylmalate dehydrogenases family. Mg(2+) serves as cofactor. Mn(2+) is required as a cofactor.

It is found in the cytoplasm. The catalysed reaction is (R)-malate + NAD(+) = pyruvate + CO2 + NADH. In terms of biological role, catalyzes the NAD(+)-dependent oxidative decarboxylation of D-malate into pyruvate. Is essential for aerobic growth on D-malate as the sole carbon source. But is not required for anaerobic D-malate utilization, although DmlA is expressed and active in those conditions. Appears to be not able to use L-tartrate as a substrate for dehydrogenation instead of D-malate. The chain is D-malate dehydrogenase [decarboxylating] (dmlA) from Escherichia coli (strain K12).